A 180-amino-acid chain; its full sequence is Signal peptidase complex subunit 2 (180 aa).

At 1-45 (MSDERITVVNKWDGPTVKNGLDEVVKKILNDKVGWTEQHNLMNLR) the chain is on the cytoplasmic side. A helical membrane pass occupies residues 46–66 (LLISFIGVAFSAFACGYDFYA). The Lumenal portion of the chain corresponds to 67-72 (PFPKSK). Residues 73–93 (IVLLVCSVSYFICMGVLQLFQ) form a helical membrane-spanning segment. At 94–180 (WYVEKDCFYE…LWARLIRSEQ (87 aa)) the chain is on the cytoplasmic side.

The protein belongs to the SPCS2 family. In terms of assembly, component of the signal peptidase complex (SPC) composed of a catalytic subunit sec-11 and three accessory subunits spcs-1, spcs-2 and spcs-3. The complex induces a local thinning of the ER membrane which is used to measure the length of the signal peptide (SP) h-region of protein substrates. This ensures the selectivity of the complex towards h-regions shorter than 18-20 amino acids.

It is found in the endoplasmic reticulum membrane. Component of the signal peptidase complex (SPC) which catalyzes the cleavage of N-terminal signal sequences from nascent proteins as they are translocated into the lumen of the endoplasmic reticulum. Enhances the enzymatic activity of SPC and facilitates the interactions between different components of the translocation site. This chain is Signal peptidase complex subunit 2, found in Caenorhabditis briggsae.